The primary structure comprises 1169 residues: Transcription-repair-coupling factor (1169 aa).

The Helicase ATP-binding domain maps to 634–795; the sequence is DMERERPMDR…MLGVRDLSVI (162 aa). 647-654 serves as a coordination point for ATP; it reads GDVGYGKT. The short motif at 748-751 is the DEEQ box element; it reads DEEQ. In terms of domain architecture, Helicase C-terminal spans 809–970; sequence VLEQNSNFIK…GFKIAMRDLN (162 aa).

It in the N-terminal section; belongs to the UvrB family. This sequence in the C-terminal section; belongs to the helicase family. RecG subfamily.

The protein resides in the cytoplasm. Functionally, couples transcription and DNA repair by recognizing RNA polymerase (RNAP) stalled at DNA lesions. Mediates ATP-dependent release of RNAP and its truncated transcript from the DNA, and recruitment of nucleotide excision repair machinery to the damaged site. This chain is Transcription-repair-coupling factor, found in Staphylococcus haemolyticus (strain JCSC1435).